A 305-amino-acid polypeptide reads, in one-letter code: Tyrosine recombinase XerC (305 aa).

Residues 2–88 (NQLELYIDTF…TLRSFYRFLE (87 aa)) enclose the Core-binding (CB) domain. The 186-residue stretch at 109–294 (PVPGFLYQEE…TKDHLREAYM (186 aa)) folds into the Tyr recombinase domain. Active-site residues include R149, K173, H246, R249, and H272. Residue Y281 is the O-(3'-phospho-DNA)-tyrosine intermediate of the active site.

It belongs to the 'phage' integrase family. XerC subfamily. Forms a cyclic heterotetrameric complex composed of two molecules of XerC and two molecules of XerD.

The protein localises to the cytoplasm. Functionally, site-specific tyrosine recombinase, which acts by catalyzing the cutting and rejoining of the recombining DNA molecules. The XerC-XerD complex is essential to convert dimers of the bacterial chromosome into monomers to permit their segregation at cell division. It also contributes to the segregational stability of plasmids. This chain is Tyrosine recombinase XerC, found in Oceanobacillus iheyensis (strain DSM 14371 / CIP 107618 / JCM 11309 / KCTC 3954 / HTE831).